Here is a 114-residue protein sequence, read N- to C-terminus: Phosphorelay protein LuxU (114 aa).

The region spanning 19–114 is the HPt domain; the sequence is GSDNVPVLLD…TRDAYRSWTN (96 aa). His58 carries the phosphohistidine modification.

Monomer.

Functionally, phosphorelay protein which receives sensory signals from LuxN and LuxP and transmits them to LuxO, at low cell density. LuxN and LuxP transfer a phosphoryl group to LuxU on His-58 and this phosphoryl group is further transferred to LuxO. At high cell density, as LuxU could function to establish an equilibrium between the aspartyl-phosphate of LuxN and the aspartyl-phosphate of LuxO, LuxU transfers phosphate from LuxO to LuxN (and probably LuxP) and finally phosphate is drained from the system. The protein is Phosphorelay protein LuxU (luxU) of Vibrio harveyi (Beneckea harveyi).